Consider the following 279-residue polypeptide: Alcohol dehydrogenase-related 31 kDa protein (279 aa).

Residue 11–34 coordinates NAD(+); sequence YVADCGGIALETSKVLMTKNIAKL. Ser139 contacts substrate. Tyr152 functions as the Proton acceptor in the catalytic mechanism.

This sequence belongs to the short-chain dehydrogenases/reductases (SDR) family.

This is Alcohol dehydrogenase-related 31 kDa protein (Adhr) from Drosophila subobscura (Fruit fly).